A 419-amino-acid polypeptide reads, in one-letter code: MKQTVLKNNLQNLLESAENILLLQGPVGDFFLRLADWLTANGKTVHKFNFNAGDDYFYPPTQAHTVVFNDNYDAFPEFLQEYITQHHIQAVVCFGDTRPYHVIAKRIANENQASFWAFEEGYFRPYYITLEKDGVNAFSPLPRRADFFLEQFPKLAQQEYKAPTPVHGGFTPMAKNAIRYYIELFRNPRKYPDYIHHRAPNAGHYLKPWSLSILKRLNYYIEDIQIAKRVEAGKYGKFFIVPLQVFNDSQVRIHCDFPSVRSFLLHVLSSFAEHAPADTNIIIKHHPMDRGFIDYWRDIKRFIKEHPELKGRVIYVHDVPLPVFLRHGLGMVTINSTSGLSGLIHNMPVKVLGRAYYDIPGITDQNTLAEFWNHPTPPDKELFHAYRMYHLNVTQINGNFYSQVFFPNKKTSNSSTPVI.

The protein localises to the cell inner membrane. Its function is as follows. Involved in the phospholipid modification of the capsular polysaccharide, a strong requirement for its translocation to the cell surface. This Neisseria meningitidis serogroup B (strain ATCC BAA-335 / MC58) protein is Capsule polysaccharide modification protein LipB (lipB).